The following is a 438-amino-acid chain: Ubiquitin carboxyl-terminal hydrolase 27 (438 aa).

In terms of domain architecture, USP spans 78-421; the sequence is RGLINLGNTC…EGYLLFYHKQ (344 aa). Catalysis depends on cysteine 87, which acts as the Nucleophile. Residue histidine 380 is the Proton acceptor of the active site.

Belongs to the peptidase C19 family. As to quaternary structure, interacts with phosphorylated BCL2L11 isoform BIMEL; this interaction leads to BCL2L11 deubiquitination and stabilization.

It localises to the cytoplasm. It is found in the cytosol. The protein localises to the nucleus. It catalyses the reaction Thiol-dependent hydrolysis of ester, thioester, amide, peptide and isopeptide bonds formed by the C-terminal Gly of ubiquitin (a 76-residue protein attached to proteins as an intracellular targeting signal).. In terms of biological role, deubiquitinase involved in innate antiviral immunity by mediating deubiquitination of CGAS and RIGI. Negatively regulates RIGI by mediating 'Lys-63'-linked deubiquitination of RIGI, inhibiting type I interferon signaling. Also regulates 'Lys-63'-linked ubiquitination level of MDA5/IFIH1. Acts as a positive regulator of the cGAS-STING pathway by catalyzing 'Lys-48'-linked deubiquitination of CGAS, thereby promoting its stabilization. Can reduce the levels of BCL2L11/BIM ubiquitination and stabilize BCL2L11 in response to the RAF-MAPK-degradation signal. By acting on BCL2L11 levels, may counteract the anti-apoptotic effects of MAPK activity. This Mus musculus (Mouse) protein is Ubiquitin carboxyl-terminal hydrolase 27.